A 1254-amino-acid chain; its full sequence is DNA polymerase gamma (1254 aa).

Basic and acidic residues predominate over residues 1125–1137 (RKKENRIDDENKK). Disordered stretches follow at residues 1125 to 1145 (RKKENRIDDENKKKLTRKKNT) and 1202 to 1240 (YKKKPSQARTASSSPIRKTAKAVHSKKLPARKSSTTNRN). Residues 1208–1217 (QARTASSSPI) show a composition bias toward polar residues. Residues 1219–1231 (KTAKAVHSKKLPA) show a composition bias toward basic residues.

The protein belongs to the DNA polymerase type-A family. Mg(2+) is required as a cofactor.

It is found in the mitochondrion. It carries out the reaction DNA(n) + a 2'-deoxyribonucleoside 5'-triphosphate = DNA(n+1) + diphosphate. Its function is as follows. Involved in the replication of mitochondrial DNA. The sequence is that of DNA polymerase gamma (MIP1) from Saccharomyces cerevisiae (strain ATCC 204508 / S288c) (Baker's yeast).